Here is a 55-residue protein sequence, read N- to C-terminus: Male-specific sperm protein Mst84Dc (55 aa).

The protein belongs to the MST(3)CGP family. Testis.

The sequence is that of Male-specific sperm protein Mst84Dc (Mst84Dc) from Drosophila melanogaster (Fruit fly).